We begin with the raw amino-acid sequence, 272 residues long: Indole-3-glycerol phosphate synthase (272 aa).

This sequence belongs to the TrpC family.

It catalyses the reaction 1-(2-carboxyphenylamino)-1-deoxy-D-ribulose 5-phosphate + H(+) = (1S,2R)-1-C-(indol-3-yl)glycerol 3-phosphate + CO2 + H2O. Its pathway is amino-acid biosynthesis; L-tryptophan biosynthesis; L-tryptophan from chorismate: step 4/5. This Mycolicibacterium paratuberculosis (strain ATCC BAA-968 / K-10) (Mycobacterium paratuberculosis) protein is Indole-3-glycerol phosphate synthase.